The sequence spans 786 residues: MKKRIPTLLATMIASALYSHQGLAADLASQCMLGVPSYDRPLVKGDTNDLPVTINADNAKGNYPDDAVFTGNVDIMQGNSRLQADEVQLHQKQAEGQPEPVRTVDALGNVHYDDNQVILKGPKGWANLNTKDTNVWEGDYQMVGRQGRGKADLMKQRGENRYTILENGSFTSCLPGSDTWSVVGSEVIHDREEQVAEIWNARFKVGPVPIFYSPYLQLPVGDKRRSGFLIPNAKYTTKNYFEFYLPYYWNIAPNMDATITPHYMHRRGNIMWENEFRYLTQAGEGVMELDYLPSDKVYEDDHPKEGDKHRWLFYWQHSGVMDQVWRFNVDYTKVSDSSYFNDFDSKYGSSTDGYATQKFSVGYAVQNFDATVSTKQFQVFNDQNTSSYSAEPQLDVNYYHNDLGPFDTRIYGQAVHFVNTKDNMPEATRVHLEPTINLPLSNRWGSLNTEAKLMATHYQQTNLDSYNSDPNNKNKLEDSVNRVMPQFKVDGKLIFERDMAMLAPGYTQTLEPRVQYLYVPYRDQSGIYNYDSSLLQSDYNGLFRDRTYGGLDRIASANQVTTGVTTRIYDDAAVERFNVSVGQIYYFTESRTGDDNIKWENDDKTGSLVWAGDTYWRISERWGLRSGVQYDTRLDSVATSSSSLEYRRDQDRLVQLNYRYASPEYIQATLPSYYSTAEQYKNGINQVGAVASWPIADRWSIVGAYYFDTNSSKPADQMLGLQYNSCCYAIRVGYERKLNGWDNDKQHAIYDNAIGFNIELRGLSSNYGLGTQEMLRSNILPYQSSM.

The signal sequence occupies residues 1-24; that stretch reads MKKRIPTLLATMIASALYSHQGLA. Disulfide bonds link cysteine 31–cysteine 726 and cysteine 173–cysteine 727.

The protein belongs to the LptD family. Component of the lipopolysaccharide transport and assembly complex. Interacts with LptE and LptA. Post-translationally, contains two intramolecular disulfide bonds.

It is found in the cell outer membrane. In terms of biological role, together with LptE, is involved in the assembly of lipopolysaccharide (LPS) at the surface of the outer membrane. The protein is LPS-assembly protein LptD of Salmonella typhimurium (strain LT2 / SGSC1412 / ATCC 700720).